Here is a 490-residue protein sequence, read N- to C-terminus: uncharacterized protein (490 aa).

Low complexity predominate over residues 370-385 (FSMKRPSSSSSSLSGS). A disordered region spans residues 370–406 (FSMKRPSSSSSSLSGSWHGDTENSVKQSLASPSEASL). The segment covering 391-406 (ENSVKQSLASPSEASL) has biased composition (polar residues).

It is found in the cytoplasm. Its subcellular location is the nucleus. This is an uncharacterized protein from Schizosaccharomyces pombe (strain 972 / ATCC 24843) (Fission yeast).